A 167-amino-acid polypeptide reads, in one-letter code: Mannose-specific lectin (167 aa).

The first 24 residues, 1–24 (MAFSISSTMIFLLSLALFSTLVSA), serve as a signal peptide directing secretion. The region spanning 25–138 (DNHLLPGERL…PIFATGTNRF (114 aa)) is the Bulb-type lectin domain. An intrachain disulfide couples C53 to C76.

As to quaternary structure, homotetramer. In terms of tissue distribution, expressed in the pseudobulb, with highest levels of expression in the non-swollen internode (at protein level).

It localises to the secreted. Functionally, mannose-specific lectin. Shows agglutinating activity towards chicken erythrocytes. Has antifungal activity against A.alternata and Collectotrichum species. In Dendrobium findlayanum (Findlay's orchid), this protein is Mannose-specific lectin.